The primary structure comprises 301 residues: Ribonuclease HIII (301 aa).

One can recognise an RNase H type-2 domain in the interval 88-301; the sequence is WSVLGSDEVG…TQKARQLARQ (214 aa). Asp-94, Glu-95, and Asp-197 together coordinate a divalent metal cation.

Belongs to the RNase HII family. RnhC subfamily. Mn(2+) serves as cofactor. Mg(2+) is required as a cofactor.

It is found in the cytoplasm. It catalyses the reaction Endonucleolytic cleavage to 5'-phosphomonoester.. Endonuclease that specifically degrades the RNA of RNA-DNA hybrids. The chain is Ribonuclease HIII from Limosilactobacillus fermentum (strain NBRC 3956 / LMG 18251) (Lactobacillus fermentum).